A 279-amino-acid polypeptide reads, in one-letter code: Tryptophan synthase alpha chain (279 aa).

Active-site proton acceptor residues include Glu-49 and Asp-60.

This sequence belongs to the TrpA family. In terms of assembly, tetramer of two alpha and two beta chains.

It catalyses the reaction (1S,2R)-1-C-(indol-3-yl)glycerol 3-phosphate + L-serine = D-glyceraldehyde 3-phosphate + L-tryptophan + H2O. Its pathway is amino-acid biosynthesis; L-tryptophan biosynthesis; L-tryptophan from chorismate: step 5/5. Functionally, the alpha subunit is responsible for the aldol cleavage of indoleglycerol phosphate to indole and glyceraldehyde 3-phosphate. This Nitrosospira multiformis (strain ATCC 25196 / NCIMB 11849 / C 71) protein is Tryptophan synthase alpha chain.